Here is a 1755-residue protein sequence, read N- to C-terminus: Transposon Ty1-GR1 Gag-Pol polyprotein (1755 aa).

Positions 1–16 are enriched in low complexity; the sequence is MESQQLSQHSHISHGS. Disordered stretches follow at residues 1 to 93, 126 to 173, and 352 to 421; these read MESQ…MMTQ, PQSQ…RPPP, and GSRN…SKST. Composition is skewed to polar residues over residues 48–60, 71–93, and 127–152; these read TKANSQQTTTPAS, SPQTAQSHSPQNGPYPQQCMMTQ, and QSQFPQYPSSVGTPLSTPSPESGNTF. Residues 153–165 show a composition bias toward low complexity; the sequence is TDSSSADSDMTST. Residues 299 to 401 are RNA-binding; it reads NNGIHINNKV…NSKSKTARAH (103 aa). The span at 402-418 shows a compositional bias: low complexity; the sequence is NVSTSNNSPSTDNDSIS. Phosphoserine is present on Ser-416. Residue Asp-461 is the For protease activity; shared with dimeric partner of the active site. Positions 583–640 are integrase-type zinc finger-like; that stretch reads NVHTSESTRKYPYPFIHRMLAHANAQTIRYSLKNNTITYFNESDVDWSSAIDYQCPDC. One can recognise an Integrase catalytic domain in the interval 660–835; that stretch reads NSYEPFQYLH…AGLDISTLLP (176 aa). Asp-671 and Asp-736 together coordinate Mg(2+). Disordered stretches follow at residues 956-1087, 1092-1111, and 1130-1187; these read SKAV…ETEK, RSPSIDASPPENNSSHNIVP, and DLPL…DNET. Positions 960 to 969 are enriched in low complexity; that stretch reads SPTDSTPPST. Over residues 1005-1015 the composition is skewed to polar residues; the sequence is STPQISNIEST. Residues 1038 to 1053 are compositionally biased toward basic and acidic residues; it reads ESSHASKSKDFRHSDS. Polar residues-rich tracts occupy residues 1054–1082 and 1101–1111; these read YSENETNHTNVPISSTGGTNNKTVPQISD and PENNSSHNIVP. A Bipartite nuclear localization signal motif is present at residues 1178–1212; the sequence is KKRSLEDNETEIKVSRDTWNTKNMRSLEPPRSKKR. Positions 1338 to 1476 constitute a Reverse transcriptase Ty1/copia-type domain; the sequence is NNYYITQLDI…DILGLEIKYQ (139 aa). Mg(2+) is bound by residues Asp-1346, Asp-1427, Asp-1428, Asp-1610, Glu-1652, and Asp-1685. An RNase H Ty1/copia-type domain is found at 1610-1752; the sequence is DASYGNQPYY…IKTFKLLTNK (143 aa).

The capsid protein forms a homotrimer, from which the VLPs are assembled. The protease is a homodimer, whose active site consists of two apposed aspartic acid residues. In terms of processing, initially, virus-like particles (VLPs) are composed of the structural unprocessed proteins Gag and Gag-Pol, and also contain the host initiator methionine tRNA (tRNA(i)-Met) which serves as a primer for minus-strand DNA synthesis, and a dimer of genomic Ty RNA. Processing of the polyproteins occurs within the particle and proceeds by an ordered pathway, called maturation. First, the protease (PR) is released by autocatalytic cleavage of the Gag-Pol polyprotein yielding capsid protein p45 and a Pol-p154 precursor protein. This cleavage is a prerequisite for subsequent processing of Pol-p154 at the remaining sites to release the mature structural and catalytic proteins. Maturation takes place prior to the RT reaction and is required to produce transposition-competent VLPs.

It localises to the cytoplasm. The protein localises to the nucleus. The catalysed reaction is DNA(n) + a 2'-deoxyribonucleoside 5'-triphosphate = DNA(n+1) + diphosphate. The enzyme catalyses Endonucleolytic cleavage to 5'-phosphomonoester.. In terms of biological role, capsid protein (CA) is the structural component of the virus-like particle (VLP), forming the shell that encapsulates the retrotransposons dimeric RNA genome. The particles are assembled from trimer-clustered units and there are holes in the capsid shells that allow for the diffusion of macromolecules. CA also has nucleocapsid-like chaperone activity, promoting primer tRNA(i)-Met annealing to the multipartite primer-binding site (PBS), dimerization of Ty1 RNA and initiation of reverse transcription. The aspartyl protease (PR) mediates the proteolytic cleavages of the Gag and Gag-Pol polyproteins after assembly of the VLP. Its function is as follows. Reverse transcriptase/ribonuclease H (RT) is a multifunctional enzyme that catalyzes the conversion of the retro-elements RNA genome into dsDNA within the VLP. The enzyme displays a DNA polymerase activity that can copy either DNA or RNA templates, and a ribonuclease H (RNase H) activity that cleaves the RNA strand of RNA-DNA heteroduplexes during plus-strand synthesis and hydrolyzes RNA primers. The conversion leads to a linear dsDNA copy of the retrotransposon that includes long terminal repeats (LTRs) at both ends. Functionally, integrase (IN) targets the VLP to the nucleus, where a subparticle preintegration complex (PIC) containing at least integrase and the newly synthesized dsDNA copy of the retrotransposon must transit the nuclear membrane. Once in the nucleus, integrase performs the integration of the dsDNA into the host genome. This chain is Transposon Ty1-GR1 Gag-Pol polyprotein (TY1B-GR1), found in Saccharomyces cerevisiae (strain ATCC 204508 / S288c) (Baker's yeast).